The following is a 253-amino-acid chain: Beta-crystallin B1 (253 aa).

Over residues 1–18 (MSQPAAKASATAAVNPGP) the composition is skewed to low complexity. The tract at residues 1–53 (MSQPAAKASATAAVNPGPDGKGKAGPPPGPAPGSGPAPAPAPAPAQPAPAAKA) is disordered. S2 carries the post-translational modification N-acetylserine. Residues 2–59 (SQPAAKASATAAVNPGPDGKGKAGPPPGPAPGSGPAPAPAPAPAQPAPAAKAELPPGS) form an N-terminal arm region. The segment covering 25-47 (GPPPGPAPGSGPAPAPAPAPAQP) has biased composition (pro residues). 2 consecutive Beta/gamma crystallin 'Greek key' domains span residues 60 to 99 (YKLV…IVTS) and 100 to 144 (GPWV…RPIK). Positions 145–149 (MDAQE) are connecting peptide. Beta/gamma crystallin 'Greek key' domains are found at residues 150-191 (HKLC…RVSS) and 192-234 (GTWV…RRLR). The tract at residues 236 to 253 (RQWHREGCFPVLAAEPPK) is C-terminal arm.

The protein belongs to the beta/gamma-crystallin family. As to quaternary structure, homo/heterodimer, or complexes of higher-order. The structure of beta-crystallin oligomers seems to be stabilized through interactions between the N-terminal arms. In terms of processing, specific cleavages in the N-terminal arm occur during lens maturation and give rise to truncated forms, leading to impaired oligomerization and protein insolubilization.

Functionally, crystallins are the dominant structural components of the vertebrate eye lens. The sequence is that of Beta-crystallin B1 (CRYBB1) from Bos taurus (Bovine).